Reading from the N-terminus, the 660-residue chain is Pseudouridylate synthase 7 homolog (660 aa).

The interval 1–99 (MEMTSTSLKR…EAGEEEEAES (99 aa)) is disordered. A Phosphoserine modification is found at Ser7. Residues 22–32 (TPHDETKKQKV) show a composition bias toward basic and acidic residues. Acidic residues predominate over residues 76 to 99 (QEEEEEEEEEDGLSEAGEEEEAES). Ser126 carries the phosphoserine modification. Residue Asp293 is the Nucleophile of the active site. The TRUD domain occupies 369–579 (GFINYYGMQR…SGAYRRIIIR (211 aa)).

The protein belongs to the pseudouridine synthase TruD family. Interacts with SIRT1.

The protein localises to the nucleus. The enzyme catalyses a uridine in tRNA = a pseudouridine in tRNA. It carries out the reaction uridine(13) in tRNA = pseudouridine(13) in tRNA. It catalyses the reaction a uridine in mRNA = a pseudouridine in mRNA. In terms of biological role, pseudouridylate synthase that catalyzes pseudouridylation of RNAs. Acts as a regulator of protein synthesis in embryonic stem cells by mediating pseudouridylation of RNA fragments derived from tRNAs (tRFs): pseudouridylated tRFs inhibit translation by targeting the translation initiation complex. Also catalyzes pseudouridylation of mRNAs: mediates pseudouridylation of mRNAs with the consensus sequence 5'-UGUAG-3'. Acts as a regulator of pre-mRNA splicing by mediating pseudouridylation of pre-mRNAs at locations associated with alternatively spliced regions. Pseudouridylation of pre-mRNAs near splice sites directly regulates mRNA splicing and mRNA 3'-end processing. In addition to mRNAs and tRNAs, binds other types of RNAs, such as snRNAs, Y RNAs and vault RNAs, suggesting that it can catalyze pseudouridylation of many RNA types. This chain is Pseudouridylate synthase 7 homolog, found in Mus musculus (Mouse).